The following is a 133-amino-acid chain: Small ribosomal subunit protein mS23 (133 aa).

This sequence belongs to the mitochondrion-specific ribosomal protein mS23 family. As to quaternary structure, component of the mitochondrial ribosome small subunit (28S) which comprises a 12S rRNA and about 30 distinct proteins.

It is found in the mitochondrion. The chain is Small ribosomal subunit protein mS23 (mrps-23) from Caenorhabditis elegans.